We begin with the raw amino-acid sequence, 197 residues long: Xanthine phosphoribosyltransferase (197 aa).

Positions 20 and 27 each coordinate xanthine. 128 to 132 contributes to the 5-phospho-alpha-D-ribose 1-diphosphate binding site; that stretch reads ANGQA. Lysine 156 is a binding site for xanthine.

The protein belongs to the purine/pyrimidine phosphoribosyltransferase family. Xpt subfamily. Homodimer.

The protein resides in the cytoplasm. The enzyme catalyses XMP + diphosphate = xanthine + 5-phospho-alpha-D-ribose 1-diphosphate. It participates in purine metabolism; XMP biosynthesis via salvage pathway; XMP from xanthine: step 1/1. Converts the preformed base xanthine, a product of nucleic acid breakdown, to xanthosine 5'-monophosphate (XMP), so it can be reused for RNA or DNA synthesis. This chain is Xanthine phosphoribosyltransferase, found in Bacillus cereus (strain ATCC 10987 / NRS 248).